Here is a 295-residue protein sequence, read N- to C-terminus: UDP-N-acetylenolpyruvoylglucosamine reductase (295 aa).

The FAD-binding PCMH-type domain occupies 24 to 188 (KVGGNAEIFF…LKAIFKANKG (165 aa)). Residue R168 is part of the active site. The Proton donor role is filled by S217. E287 is a catalytic residue.

Belongs to the MurB family. FAD serves as cofactor.

The protein localises to the cytoplasm. It catalyses the reaction UDP-N-acetyl-alpha-D-muramate + NADP(+) = UDP-N-acetyl-3-O-(1-carboxyvinyl)-alpha-D-glucosamine + NADPH + H(+). It participates in cell wall biogenesis; peptidoglycan biosynthesis. In terms of biological role, cell wall formation. This is UDP-N-acetylenolpyruvoylglucosamine reductase from Rickettsia typhi (strain ATCC VR-144 / Wilmington).